Here is a 269-residue protein sequence, read N- to C-terminus: Mitochondrial acidic protein mam33 (269 aa).

It belongs to the MAM33 family.

It is found in the cytoplasm. Its subcellular location is the mitochondrion matrix. In Schizosaccharomyces pombe (strain 972 / ATCC 24843) (Fission yeast), this protein is Mitochondrial acidic protein mam33.